We begin with the raw amino-acid sequence, 1220 residues long: DNA polymerase catalytic subunit (1220 aa).

2 disordered regions span residues Gly-21–Gln-43 and Gln-641–Val-691. The segment covering Ser-646–Phe-660 has biased composition (polar residues).

This sequence belongs to the DNA polymerase type-B family. Forms a complex with the ssDNA-binding protein, the DNA polymerase processivity factor, and the alkaline exonuclease. Interacts with the helicase-primase complex composed of the primase, the helicase and the primase-associated factor; this interaction may coordinate leading and lagging strand DNA synthesis at the replication fork.

Its subcellular location is the host nucleus. It carries out the reaction DNA(n) + a 2'-deoxyribonucleoside 5'-triphosphate = DNA(n+1) + diphosphate. It catalyses the reaction Endonucleolytic cleavage to 5'-phosphomonoester.. Replicates viral genomic DNA. The replication complex is composed of six viral proteins: the DNA polymerase, processivity factor, primase, primase-associated factor, helicase, and ssDNA-binding protein. Additionally, the polymerase contains an intrinsic ribonuclease H (RNase H) activity that specifically degrades RNA/DNA heteroduplexes or duplex DNA substrates in the 5' to 3' direction. Therefore, it can catalyze the excision of the RNA primers that initiate the synthesis of Okazaki fragments at a replication fork during viral DNA replication. The polypeptide is DNA polymerase catalytic subunit (Equine herpesvirus 1 (strain Ab4p) (EHV-1)).